Reading from the N-terminus, the 302-residue chain is Cyclin-C (302 aa).

Residues 46–152 enclose the Cyclin N-terminal domain; sequence NFITAVATEG…VYDSEFILVE (107 aa). A disordered region spans residues 281–302; it reads LPKPNQQPPPQQQHQHQQGYHL. The segment covering 292 to 302 has biased composition (low complexity); the sequence is QQHQHQQGYHL.

It belongs to the cyclin family. Cyclin C subfamily. In terms of assembly, component of the Mediator complex.

It localises to the nucleus. Its function is as follows. Component of the Mediator complex, a coactivator involved in regulated gene transcription of nearly all RNA polymerase II-dependent genes. Mediator functions as a bridge to convey information from gene-specific regulatory proteins to the basal RNA polymerase II transcription machinery. Mediator is recruited to promoters by direct interactions with regulatory proteins and serves as a scaffold for the assembly of a functional preinitiation complex with RNA polymerase II and the general transcription factors. Binds to and activates cyclin-dependent kinase cdk-8 that phosphorylates the CTD (C-terminal domain) of the large subunit of RNA polymerase II (RNAp II), which may inhibit the formation of a transcription initiation complex. This is Cyclin-C (cic-1) from Caenorhabditis elegans.